A 386-amino-acid chain; its full sequence is Flap endonuclease 1 (386 aa).

The tract at residues 1–104 is N-domain; it reads MGILGLSKLI…GELAKRAERR (104 aa). Position 34 (aspartate 34) interacts with Mg(2+). The DNA site is built by arginine 47 and arginine 70. Mg(2+)-binding residues include aspartate 86, glutamate 158, glutamate 160, aspartate 179, and aspartate 181. The segment at 122-253 is I-domain; it reads EIEKFNRRLV…KRAIELINNY (132 aa). Glutamate 158 is a binding site for DNA. DNA-binding residues include glycine 231 and aspartate 233. Aspartate 233 serves as a coordination point for Mg(2+). Positions 336 to 344 are interaction with PCNA; the sequence is TQVRLDSFF. Residues 354–386 are disordered; sequence VNAAKRKAEEAKKSANNKKAKTSGGAARGRRPK.

Belongs to the XPG/RAD2 endonuclease family. FEN1 subfamily. In terms of assembly, interacts with PCNA. Three molecules of FEN1 bind to one PCNA trimer with each molecule binding to one PCNA monomer. PCNA stimulates the nuclease activity without altering cleavage specificity. It depends on Mg(2+) as a cofactor. Phosphorylated. Phosphorylation upon DNA damage induces relocalization to the nuclear plasma.

Its subcellular location is the nucleus. It localises to the nucleolus. It is found in the nucleoplasm. The protein localises to the mitochondrion. Functionally, structure-specific nuclease with 5'-flap endonuclease and 5'-3' exonuclease activities involved in DNA replication and repair. During DNA replication, cleaves the 5'-overhanging flap structure that is generated by displacement synthesis when DNA polymerase encounters the 5'-end of a downstream Okazaki fragment. It enters the flap from the 5'-end and then tracks to cleave the flap base, leaving a nick for ligation. Also involved in the long patch base excision repair (LP-BER) pathway, by cleaving within the apurinic/apyrimidinic (AP) site-terminated flap. Acts as a genome stabilization factor that prevents flaps from equilibrating into structures that lead to duplications and deletions. Also possesses 5'-3' exonuclease activity on nicked or gapped double-stranded DNA, and exhibits RNase H activity. Also involved in replication and repair of rDNA and in repairing mitochondrial DNA. The chain is Flap endonuclease 1 from Drosophila pseudoobscura pseudoobscura (Fruit fly).